A 364-amino-acid chain; its full sequence is tRNA-specific 2-thiouridylase MnmA (364 aa).

Residues 6–13 (AMSGGVDS) and L32 contribute to the ATP site. The active-site Nucleophile is C101. A disulfide bridge connects residues C101 and C193. Residue G125 coordinates ATP. An interaction with tRNA region spans residues 143–145 (KDQ). The active-site Cysteine persulfide intermediate is the C193.

It belongs to the MnmA/TRMU family.

The protein resides in the cytoplasm. It carries out the reaction S-sulfanyl-L-cysteinyl-[protein] + uridine(34) in tRNA + AH2 + ATP = 2-thiouridine(34) in tRNA + L-cysteinyl-[protein] + A + AMP + diphosphate + H(+). Catalyzes the 2-thiolation of uridine at the wobble position (U34) of tRNA, leading to the formation of s(2)U34. This chain is tRNA-specific 2-thiouridylase MnmA, found in Rhodococcus jostii (strain RHA1).